Here is a 671-residue protein sequence, read N- to C-terminus: Protein KHNYN (671 aa).

Disordered regions lie at residues 234-274, 294-327, 344-402, and 577-626; these read RVAG…LSGE, EVAPLKGKASGKQEVPQQRGGFSVQGEPSGAHVP, HNGS…GGNL, and GPTL…RKTR. Residues 250 to 272 show a composition bias toward basic and acidic residues; the sequence is TVEKEERKQDAVRDMGSGRKELS. Positions 351–365 are enriched in pro residues; the sequence is PRVPSPPPAPEPPWP. Residue Ser-355 is modified to Phosphoserine. Positions 367 to 381 are enriched in basic and acidic residues; that stretch reads GDRDRDRDRGDRGDK. The 153-residue stretch at 430–582 folds into the RNase NYN domain; the sequence is LRHIVIDGSN…LGRNGPTLDE (153 aa). Over residues 591–612 the composition is skewed to polar residues; that stretch reads QGSSKTQQPSKGSTEQANQQQG.

This sequence belongs to the N4BP1 family.

This chain is Protein KHNYN (Khnyn), found in Mus musculus (Mouse).